The sequence spans 977 residues: AP-2 complex subunit alpha-1 (977 aa).

A disordered region spans residues 614–702; it reads AKLKRKKGPG…PSLGPTPEEA (89 aa). Phosphoserine is present on residues S626 and S652. The span at 646–657 shows a compositional bias: low complexity; it reads PTPSTVSTPSPS. T653 carries the post-translational modification Phosphothreonine. The residue at position 655 (S655) is a Phosphoserine. The segment covering 666 to 675 has biased composition (pro residues); it reads APPPAAPPAP.

It belongs to the adaptor complexes large subunit family. Adaptor protein complex 2 (AP-2) is a heterotetramer composed of two large adaptins (alpha-type subunit AP2A1 or AP2A2 and beta-type subunit AP2B1), a medium adaptin (mu-type subunit AP2M1) and a small adaptin (sigma-type subunit AP2S1). Interacts with HIP1 and RAB11FIP2. Interacts with SLC12A5. Interacts with clathrin. Interacts with SGIP1. Interacts with RFTN1. Interacts with KIAA1107. Interacts with PICALM. Together with AP2B1 and AP2M1, it interacts with ADAM10; this interaction facilitates ADAM10 endocytosis from the plasma membrane during long-term potentiation in hippocampal neurons. Interacts with ABCB11; this interaction regulates cell membrane expression of ABCB11 through its internalization in a clathrin-dependent manner and its subsequent degradation. Probably interacts with ACE2 (via endocytic sorting signal motif); the interaction is inhibited by ACE2 phosphorylation. In terms of tissue distribution, expressed in the brain (at protein level). Isoform A: Expressed only in neuronal tissue and skeletal muscle. Isoform B: Widely expressed.

The protein localises to the cell membrane. It localises to the membrane. Its subcellular location is the coated pit. Component of the adaptor protein complex 2 (AP-2). Adaptor protein complexes function in protein transport via transport vesicles in different membrane traffic pathways. Adaptor protein complexes are vesicle coat components and appear to be involved in cargo selection and vesicle formation. AP-2 is involved in clathrin-dependent endocytosis in which cargo proteins are incorporated into vesicles surrounded by clathrin (clathrin-coated vesicles, CCVs) which are destined for fusion with the early endosome. The clathrin lattice serves as a mechanical scaffold but is itself unable to bind directly to membrane components. Clathrin-associated adaptor protein (AP) complexes which can bind directly to both the clathrin lattice and to the lipid and protein components of membranes are considered to be the major clathrin adaptors contributing the CCV formation. AP-2 also serves as a cargo receptor to selectively sort the membrane proteins involved in receptor-mediated endocytosis. AP-2 seems to play a role in the recycling of synaptic vesicle membranes from the presynaptic surface. AP-2 recognizes Y-X-X-[FILMV] (Y-X-X-Phi) and [ED]-X-X-X-L-[LI] endocytosis signal motifs within the cytosolic tails of transmembrane cargo molecules. AP-2 may also play a role in maintaining normal post-endocytic trafficking through the ARF6-regulated, non-clathrin pathway. The AP-2 alpha subunit binds polyphosphoinositide-containing lipids, positioning AP-2 on the membrane. During long-term potentiation in hippocampal neurons, AP-2 is responsible for the endocytosis of ADAM10. The AP-2 alpha subunit acts via its C-terminal appendage domain as a scaffolding platform for endocytic accessory proteins. The AP-2 alpha and AP-2 sigma subunits are thought to contribute to the recognition of the [ED]-X-X-X-L-[LI] motif. In Mus musculus (Mouse), this protein is AP-2 complex subunit alpha-1 (Ap2a1).